The sequence spans 695 residues: MAREFSLEKTRNIGIMAHIDAGKTTTTERILFYTGRIHKIGETHEGASQMDWMEQEQERGITITSAATTAQWKGYRVNIIDTPGHVDFTVEVERSLRVLDGAVAVLDAQSGVEPQTETVWRQATTYGVPRVVFVNKMDKIGADFLYSVGTLHERLAANAHPIQLPIGAEDTFEGIIDLIEMNALYYEDDLGNDPHVKEIPADLKDLADEYRGKLVEAVAELDEELMMKYLEGEEITKEELKAGIRKGTLNVEFYPVVCGTAFKNKGVQPMLDAVLDYLPAPTDVPAINGVLPDGEEAARHADDSEPFSSLAFKVMTDPYVGRLTFFRVYSGTLNSGSYVQNSTKGKRERVGRILQMHANHREEISIVYAGDIAAAVGLKDTTTGDTLCDEKEQIILESMEFPEPVIQVAIEPKSKADQDKMGQALAKLAEEDPTFRAETDQETGQTLISGMGELHLDILVDRMRREFRVEANVGDPQVSYRETFRKSAQVEGKFVRQSGGRGQYGHVWIEFGPNEEGKGFEFENAIVGGVVPREYIPAVQAGLEGALDNGVLAGYPLIDIKAKLYDGSYHDVDSNEMAFKVAASMALRNAAKKCDPVILEPMMAVEVVIPEEYLGDIMGNITSRRGRVDGMEARGNAQVVRAFVPLANMFGYATHLRSGTQGRGVYTMQFDHYEEVPKSIAEEIIKANGGNNKED.

Residues 8–282 (EKTRNIGIMA…AVLDYLPAPT (275 aa)) form the tr-type G domain. GTP-binding positions include 17 to 24 (AHIDAGKT), 81 to 85 (DTPGH), and 135 to 138 (NKMD).

Belongs to the TRAFAC class translation factor GTPase superfamily. Classic translation factor GTPase family. EF-G/EF-2 subfamily.

The protein resides in the cytoplasm. In terms of biological role, catalyzes the GTP-dependent ribosomal translocation step during translation elongation. During this step, the ribosome changes from the pre-translocational (PRE) to the post-translocational (POST) state as the newly formed A-site-bound peptidyl-tRNA and P-site-bound deacylated tRNA move to the P and E sites, respectively. Catalyzes the coordinated movement of the two tRNA molecules, the mRNA and conformational changes in the ribosome. This Listeria welshimeri serovar 6b (strain ATCC 35897 / DSM 20650 / CCUG 15529 / CIP 8149 / NCTC 11857 / SLCC 5334 / V8) protein is Elongation factor G.